Consider the following 359-residue polypeptide: 3-dehydroquinate synthase (359 aa).

Residues 71-76, 105-109, 129-130, Lys142, Lys151, and 169-172 contribute to the NAD(+) site; these read DGEQYK, GVIGD, TT, and CLST. Zn(2+) contacts are provided by Glu184, His247, and His264.

The protein belongs to the sugar phosphate cyclases superfamily. Dehydroquinate synthase family. Co(2+) is required as a cofactor. The cofactor is Zn(2+). NAD(+) serves as cofactor.

Its subcellular location is the cytoplasm. It carries out the reaction 7-phospho-2-dehydro-3-deoxy-D-arabino-heptonate = 3-dehydroquinate + phosphate. Its pathway is metabolic intermediate biosynthesis; chorismate biosynthesis; chorismate from D-erythrose 4-phosphate and phosphoenolpyruvate: step 2/7. Its function is as follows. Catalyzes the conversion of 3-deoxy-D-arabino-heptulosonate 7-phosphate (DAHP) to dehydroquinate (DHQ). In Shewanella piezotolerans (strain WP3 / JCM 13877), this protein is 3-dehydroquinate synthase.